Here is a 144-residue protein sequence, read N- to C-terminus: Large ribosomal subunit protein uL15 (144 aa).

The segment at 1–58 (MRLNTLSPAAGSKPSKKRVGRGIGSGLGKTGGRGHKGQKSRSGGSVRPGFEGGQMPLK) is disordered. Gly residues predominate over residues 21-31 (RGIGSGLGKTG).

It belongs to the universal ribosomal protein uL15 family. As to quaternary structure, part of the 50S ribosomal subunit.

Binds to the 23S rRNA. The sequence is that of Large ribosomal subunit protein uL15 from Vibrio atlanticus (strain LGP32) (Vibrio splendidus (strain Mel32)).